Reading from the N-terminus, the 251-residue chain is Fibroblast growth factor 23 (251 aa).

Positions 1-24 (MLGARLRLWVCALCSVCSMSVLRA) are cleaved as a signal peptide. C95 and C113 form a disulfide bridge. 2 O-linked (GalNAc) threonine glycosylation sites follow: T171 and T178. The disordered stretch occupies residues 172 to 221 (PIPRRHTRSAEDDSERDPLNVLKPRARMTPAPASCSQELPSAEDNSPMAS). The residue at position 180 (S180) is a Phosphoserine; by FAM20C. Residues 205 to 219 (SCSQELPSAEDNSPM) are compositionally biased toward polar residues.

It belongs to the heparin-binding growth factors family. As to quaternary structure, interacts with FGFR1, FGFR2, FGFR3 and FGFR4. Affinity between fibroblast growth factors (FGFs) and their receptors is increased by KL and heparan sulfate glycosaminoglycans that function as coreceptors. Following secretion this protein is inactivated by cleavage into a N-terminal fragment and a C-terminal fragment. The processing is effected by proprotein convertases. Post-translationally, O-glycosylated at Thr-171 and Thr-178 by GALNT3 and glycosylation of Thr-178 requires previous glycosylation at Thr171. Glycosylation is necessary for secretion; it blocks processing by proprotein convertases when the O-glycan is alpha 2,6-sialylated. Competition between proprotein convertase cleavage and block of cleavage by O-glycosylation determines the level of secreted active FGF23. In terms of processing, phosphorylation at Ser-180 mediated by FAM20C slows down glycosylation at Thr-178 notably. As to expression, expressed in osteogenic cells particularly during phases of active bone remodeling. In adult trabecular bone, expressed in osteocytes and flattened bone-lining cells (inactive osteoblasts).

The protein localises to the secreted. Functionally, regulator of phosphate homeostasis. Inhibits renal tubular phosphate transport by reducing SLC34A1 levels. Up-regulates EGR1 expression in the presence of KL. Acts directly on the parathyroid to decrease PTH secretion. Regulator of vitamin-D metabolism. Negatively regulates osteoblast differentiation and matrix mineralization. This is Fibroblast growth factor 23 (FGF23) from Homo sapiens (Human).